A 751-amino-acid chain; its full sequence is Serine/threonine-protein kinase B-raf (751 aa).

Residues 1–32 show a composition bias toward gly residues; the sequence is MAALSGGGGSSSGGGGGGGGGGGGGDGGGGAE. The disordered stretch occupies residues 1–55; it reads MAALSGGGGSSSGGGGGGGGGGGGGDGGGGAEQGQALFNGDMEPEAGAGAAASSA. An N-acetylalanine modification is found at A2. Residues 46–55 show a composition bias toward low complexity; sequence AGAGAAASSA. Residue S135 is modified to Phosphoserine. The 73-residue stretch at 139 to 211 folds into the RBD domain; the sequence is PIVRVFLPNK…TGEELHVEVL (73 aa). Residues H219, C232, C235, C245, C248, H253, C256, and C264 each contribute to the Zn(2+) site. Residues 288–440 are disordered; that stretch reads EASFPETALP…SSDDWEIPDG (153 aa). A compositionally biased stretch (low complexity) spans 297-324; sequence PSGSSSAPPSDSTGPQILTSPSPSKSIP. S316 bears the Phosphoserine mark. Residues 331 to 346 show a composition bias toward basic and acidic residues; the sequence is PADEDHRNQFGQRDRS. At S348 the chain carries Phosphoserine. At T356 the chain carries Phosphothreonine; by autocatalysis. The residue at position 379 (T379) is a Phosphothreonine. The residue at position 382 (S382) is a Phosphoserine. Phosphothreonine is present on T384. The span at 406–432 shows a compositional bias: basic and acidic residues; the sequence is QRERKSSSSSSSEDRSRMKTLGRRDSS. 2 positions are modified to phosphoserine: S431 and S432. One can recognise a Protein kinase domain in the interval 442–702; that stretch reads ITVGQRIGSG…PQILASIELL (261 aa). Residues 448-456 and K468 each bind ATP; that span reads IGSGSFGTV. The Proton acceptor role is filled by D561. Residue K563 forms a Glycyl lysine isopeptide (Lys-Gly) (interchain with G-Cter in ubiquitin) linkage. At R656 the chain carries Omega-N-methylarginine; by PRMT5. Phosphoserine is present on residues S714 and S735. Residue T738 is modified to Phosphothreonine; by MAPK1.

It belongs to the protein kinase superfamily. TKL Ser/Thr protein kinase family. RAF subfamily. In terms of assembly, monomer. Homodimer. Heterodimerizes with RAF1, and the heterodimer possesses a highly increased kinase activity compared to the respective homodimers or monomers. Heterodimerization is mitogen-regulated and enhanced by 14-3-3 proteins. MAPK1/ERK2 activation can induce a negative feedback that promotes the dissociation of the heterodimer by phosphorylating BRAF at Thr-738. Heterodimerizes (via N-terminus) with KSR1 (via N-terminus) or KSR2 (via N-terminus) in a MAP2K1-dependent manner. Interacts with MAP2K1 and MAP2K2. Found in a complex with at least BRAF, HRAS, MAP2K1, MAPK3 and RGS14. Interacts with RIT1. Interacts (via N-terminus) with RGS14 (via RBD domains); the interaction mediates the formation of a ternary complex with RAF1, a ternary complex inhibited by GNAI1. Interacts with DGKH. Interacts with PRMT5. Interacts with AKAP13, MAP2K1 and KSR1. Identified in a complex with AKAP13, KSR1 and MAP2K1. Interacts with FNIP1 and FNIP2. Zn(2+) serves as cofactor. Phosphorylation at Ser-348 by SGK1 inhibits its activity. Dephosphorylation of Ser-348 by the SHOC2-MRAS-PP1c (SMP) complex consisting of SHOC2, GTP-bound M-Ras/MRAS and the catalytic subunit of protein phosphatase 1 (PPP1CA, PPP1CB or PPP1CC); this relieves inactivation and stimulates kinase activity. Post-translationally, methylation by PRMT5 decreases stability and kinase activity. In terms of processing, ubiquitinated by RNF149; which leads to proteasomal degradation. Polyubiquitinated at Lys-615 in response to EGF.

It localises to the nucleus. The protein resides in the cytoplasm. It is found in the cell membrane. It carries out the reaction L-seryl-[protein] + ATP = O-phospho-L-seryl-[protein] + ADP + H(+). The catalysed reaction is L-threonyl-[protein] + ATP = O-phospho-L-threonyl-[protein] + ADP + H(+). In quiescent cells, maintained in an inactive state via an intramolecular interaction between the protein kinase and N-terminal domains. Following mitogen-mediated cell activation, binds via its RGB domain to active HRAS (GTP-bound) which releases the inhibitory intramolecular interaction between the two domains. This allows the MAP2K1-mediated dimerization of KSR1 or KSR2, and BRAF which activates BRAF. In terms of biological role, involved in the transduction of mitogenic signals from the cell membrane to the nucleus. Phosphorylates MAP2K1, and thereby activates the MAP kinase signal transduction pathway. Phosphorylates PFKFB2. May play a role in the postsynaptic responses of hippocampal neurons. This chain is Serine/threonine-protein kinase B-raf, found in Mus musculus (Mouse).